Consider the following 271-residue polypeptide: Mannosyl-3-phosphoglycerate phosphatase (271 aa).

Catalysis depends on Asp13, which acts as the Nucleophile. Positions 13, 15, and 214 each coordinate Mg(2+).

The protein belongs to the HAD-like hydrolase superfamily. MPGP family. Mg(2+) is required as a cofactor.

The protein resides in the cytoplasm. It catalyses the reaction 2-O-(alpha-D-mannosyl)-3-phosphoglycerate + H2O = (2R)-2-O-(alpha-D-mannosyl)-glycerate + phosphate. In Escherichia coli O127:H6 (strain E2348/69 / EPEC), this protein is Mannosyl-3-phosphoglycerate phosphatase.